A 218-amino-acid polypeptide reads, in one-letter code: Large ribosomal subunit protein uL3 (218 aa).

It belongs to the universal ribosomal protein uL3 family. In terms of assembly, part of the 50S ribosomal subunit. Forms a cluster with proteins L14 and L19.

In terms of biological role, one of the primary rRNA binding proteins, it binds directly near the 3'-end of the 23S rRNA, where it nucleates assembly of the 50S subunit. This Mycolicibacterium gilvum (strain PYR-GCK) (Mycobacterium gilvum (strain PYR-GCK)) protein is Large ribosomal subunit protein uL3.